A 126-amino-acid chain; its full sequence is Glycine cleavage system H protein (126 aa).

One can recognise a Lipoyl-binding domain in the interval 22-103; that stretch reads KAYIGITDYA…PYGSWMALVE (82 aa). Position 63 is an N6-lipoyllysine (Lys-63).

Belongs to the GcvH family. As to quaternary structure, the glycine cleavage system is composed of four proteins: P, T, L and H. (R)-lipoate is required as a cofactor.

Functionally, the glycine cleavage system catalyzes the degradation of glycine. The H protein shuttles the methylamine group of glycine from the P protein to the T protein. The protein is Glycine cleavage system H protein of Thermoanaerobacter pseudethanolicus (strain ATCC 33223 / 39E) (Clostridium thermohydrosulfuricum).